The sequence spans 529 residues: AT hook-containing protein attf-4 (529 aa).

4 disordered regions span residues 1–39 (MLQP…MEDD), 131–158 (QVVH…KPIE), 173–200 (GGGG…FPPP), and 233–255 (VSAN…DHLE). Polar residues-rich tracts occupy residues 19–31 (SVST…SPSN) and 138–153 (QNGS…TSEN). Over residues 179-189 (IHTERLSEPAR) the composition is skewed to basic and acidic residues. The segment covering 233 to 248 (VSANTSTASPGPSSEG) has biased composition (low complexity). A DNA-binding region (a.T hook) is located at residues 307 to 319 (GRGRGRPKLIGDE). Residues 436-476 (LEGGSPPASSSSTATTSTATKTVKQESKNGHQNEENLNVKQ) form a disordered region. Residues 443–455 (ASSSSTATTSTAT) show a composition bias toward low complexity. Residues 458–469 (VKQESKNGHQNE) are compositionally biased toward basic and acidic residues.

This is AT hook-containing protein attf-4 from Caenorhabditis elegans.